The primary structure comprises 555 residues: Cytochrome P450 78A11 (555 aa).

Residues 12 to 32 (VDATWWAYALPALLGADTLCA) form a helical membrane-spanning segment. Cys-495 is a heme binding site.

Belongs to the cytochrome P450 family. Heme is required as a cofactor. As to expression, expressed in seedlings, shoot apices and young panicles, but not in mature leaves, calli and roots.

It localises to the membrane. Its function is as follows. Involved in the regular timing (plastochron) of lateral organs formation. May regulate the rate of leaf initiation and the duration of vegetative phase. Seems to be redundant to the function of PLASTOCHRON2, but to act in an independent pathway. This chain is Cytochrome P450 78A11 (CYP78A11), found in Oryza sativa subsp. japonica (Rice).